The following is a 366-amino-acid chain: Gelsolin-like protein 2 (366 aa).

Gelsolin-like repeat units lie at residues 55 to 139, 177 to 252, and 286 to 327; these read NFKV…DLFL, KHIV…HEFY, and KSTV…AQEK. The actin binding stretch occupies residues 100–116; the sequence is KSTQDEYCVAAYKTVEL. Residues 104–107 form an actin-actin interfilament contact point region; it reads DEYC.

This sequence belongs to the villin/gelsolin family. Interacts with actin monomers and filaments. Expressed in circular and longitudinal muscle, pseudohearts, pharynx and gizzard. Not expressed in seminal vesicles.

The protein localises to the cytoplasm. It is found in the cytoskeleton. Functionally, calcium-regulated protein that binds to the plus (or barbed) ends of actin monomers or filaments, preventing monomer exchange (end-blocking or capping). Can promote the assembly of monomers into filaments (nucleation) as well as sever existing filaments. The chain is Gelsolin-like protein 2 from Lumbricus terrestris (Common earthworm).